The primary structure comprises 653 residues: DUF21 domain-containing protein At1g55930, chloroplastic (653 aa).

A chloroplast-targeting transit peptide spans Met1–Val72. Helical transmembrane passes span Gly103–Ala123, Gly157–Ile177, Phe208–Thr228, Ile234–Leu254, and Trp280–Leu300. Residues Val149–Glu335 form the CNNM transmembrane domain. CBS domains are found at residues Met354–Ser415 and Met421–Glu479.

The protein resides in the plastid. Its subcellular location is the chloroplast membrane. The protein is DUF21 domain-containing protein At1g55930, chloroplastic (CBSDUFCH2) of Arabidopsis thaliana (Mouse-ear cress).